Reading from the N-terminus, the 959-residue chain is Bifunctional premutilin synthase (959 aa).

A class II diterpene cyclase region spans residues 1-542 (MGLSEDLHAR…ALNVPIPRFD (542 aa)). The DXDD motif motif lies at 309-312 (DADM). Aspartate 311 (for class II diterpene cyclase activity) is an active-site residue. The interval 543–959 (PASITTLPPI…TANGSNGIHH (417 aa)) is class I diterpene synthase. Aspartate 649 serves as the catalytic For class I diterpene synthase activity. The Mg(2+) site is built by aspartate 649, aspartate 653, and asparagine 824. Residues 649–653 (DDYLD) carry the DDXXD motif motif. Residues 931–959 (KGANGVKKTNGLTTNGTKATANGSNGIHH) form a disordered region. The segment covering 934-959 (NGVKKTNGLTTNGTKATANGSNGIHH) has biased composition (low complexity).

The protein belongs to the terpene synthase family. It depends on Mg(2+) as a cofactor.

Its pathway is secondary metabolite biosynthesis; terpenoid biosynthesis. In terms of biological role, bifunctional premutilin synthase; part of the gene cluster that mediates the biosynthesis of pleuromutilin, a tricyclic diterpene showing antibacterial properties. The geranylgeranyl diphosphate (GGPP) synthase ple4 catalyzes the first step in pleuromutilin biosynthesis. GGPP is then substrate of the premutilin synthase (PS) ple3 to yield premutilin. Premutilin synthase is a bifunctional enzyme composed of the fusion of a class II diterpene cyclase (DTC) and a class I diterpene synthase (DTS), with the corresponding domains and active sites containing characteristic aspartate-rich motifs. GGPP is first converted to mutildienyl-diphosphate (MPP) at the class II DTC site. MPP is subsequently further cyclized at the class I DTS site, followed by a 1,5-hydride shift and addition of water prior to terminating deprotonation, to yield premutilin. The cytochrome P450 monooxygenases ple5 and ple6 hydroxylate premutilin at C-11 and C-3, respectively, producing 11-hydroxypremutilin and 3-hydroxypremutilin. The combination of the actions of both ple5 and ple6 leads to the production of 3,11-dihydroxypremutilin. The short chain dehydrogenase ple7 further converts 3,11-dihydroxypremutilin into mutilin. The acetyltransferase ple2 then acetylates mutilin to produce 14-O-acetylmutilin. Finally, the cytochrome P450 monooxygenase ple1 catalyzes hydroxylation on the alpha position of the acetyl side chain of 14-O-acetylmutilin to yield pleuromutilin. The chain is Bifunctional premutilin synthase from Rhodocybe pseudopiperita (Clitopilus pseudopiperitus).